The primary structure comprises 376 residues: Ribosomal RNA large subunit methyltransferase G (376 aa).

This sequence belongs to the methyltransferase superfamily. RlmG family.

Its subcellular location is the cytoplasm. The enzyme catalyses guanosine(1835) in 23S rRNA + S-adenosyl-L-methionine = N(2)-methylguanosine(1835) in 23S rRNA + S-adenosyl-L-homocysteine + H(+). Specifically methylates the guanine in position 1835 (m2G1835) of 23S rRNA. The chain is Ribosomal RNA large subunit methyltransferase G from Klebsiella pneumoniae (strain 342).